Here is a 381-residue protein sequence, read N- to C-terminus: Cobalt-precorrin-5B C(1)-methyltransferase (381 aa).

Belongs to the CbiD family.

It catalyses the reaction Co-precorrin-5B + S-adenosyl-L-methionine = Co-precorrin-6A + S-adenosyl-L-homocysteine. It functions in the pathway cofactor biosynthesis; adenosylcobalamin biosynthesis; cob(II)yrinate a,c-diamide from sirohydrochlorin (anaerobic route): step 6/10. Its function is as follows. Catalyzes the methylation of C-1 in cobalt-precorrin-5B to form cobalt-precorrin-6A. The sequence is that of Cobalt-precorrin-5B C(1)-methyltransferase from Prochlorococcus marinus (strain SARG / CCMP1375 / SS120).